We begin with the raw amino-acid sequence, 27 residues long: Bombinin-like peptide 2 (27 aa).

Position 27 is an asparagine amide (N27).

This sequence belongs to the bombinin family. In terms of tissue distribution, expressed by the skin glands.

The protein resides in the secreted. Has antimicrobial activity, but no hemolytic activity. Preference on killing Gram-negative non-enteric bacteria. The sequence is that of Bombinin-like peptide 2 from Bombina orientalis (Oriental fire-bellied toad).